The primary structure comprises 215 residues: Adenylate kinase (215 aa).

An ATP-binding site is contributed by 10-15 (GAGKGT). An NMP region spans residues 30–59 (STGDMFRAAMKNNTELGKKAKSFMDNGDLV). AMP is bound by residues threonine 31, arginine 36, 57-59 (DLV), 85-88 (GFPR), and glutamine 92. Positions 126-163 (GRWICRTCGKTYHEIYNPPKVPGKCDLDGGELYQREDD) are LID. Arginine 127 contributes to the ATP binding site. Positions 130 and 133 each coordinate Zn(2+). 136–137 (TY) provides a ligand contact to ATP. Cysteine 150 and aspartate 153 together coordinate Zn(2+). The AMP site is built by arginine 160 and arginine 171. Position 199 (glutamine 199) interacts with ATP.

This sequence belongs to the adenylate kinase family. As to quaternary structure, monomer.

It is found in the cytoplasm. It catalyses the reaction AMP + ATP = 2 ADP. Its pathway is purine metabolism; AMP biosynthesis via salvage pathway; AMP from ADP: step 1/1. In terms of biological role, catalyzes the reversible transfer of the terminal phosphate group between ATP and AMP. Plays an important role in cellular energy homeostasis and in adenine nucleotide metabolism. The protein is Adenylate kinase of Listeria innocua serovar 6a (strain ATCC BAA-680 / CLIP 11262).